A 1477-amino-acid polypeptide reads, in one-letter code: MEVKEEKLMEEKQRLPEKTIPVFTVLKNGAILKNIFVVNSRDFSSPERNGSTVSDDDGEVEEILVVGRHPDCDILLTHPSISRFHLEIRSISSRQKLFVTDLSSVHGTWVRDLRIEPHGCVEVEEGDTIRIGGSTRIYRLHWIPLSRAYDLDNPFVSPLDASTVLEQEEENRMLEAENLEVAQHQSLENTTSGDEGVLHLDVTSEGTGSSVPSEDEDTYVTTREMSMPVASPSVLTLVRDSVETQKLQFNEDLQTSPKWDLDVIESVAEKLSGSFVRSTQQSGGDVEGLGCSELFDAAEADECDVRGDGGLHLNVISEKMESSVPNMIEAENLEVAQHQSLANTALGDDEDLHLDVTSEGTGSSVPSEDEDTYITTMEISVPLASPNVLTLARDSIKTQKLQSTQDFQTPTMWDLDVVEAAAEKPSSSCVLGKKLSGGYVEELGCFELFVAAEADKCDVRGDGSLHLNEISERMESSMSNKEDDPFLAAKETSSLPLSTDFINPETLWLVEDVQASPEFCTSSVKANAENPSSGCSPSTEQIDGCFETSGCSAFDLAAEVESLSLHQEVSEETEFVTKEVMGVSSEPLGKADIRSHEENGESEDSRQVIEVSAEPVAKADIQSHEENGETEGSRQVIEVSPKSFSEAEPTIEILTGEAQGIIGSEFPSELAVETESENLLHQKSIGETKNEIRSHEDYGETEDYGETECSWPDIAVSPSSVSPPEPTLEILTDEARGLLGSEFLSEVTVETEIENLLHQKSNVETKADILIHEDYGETEVSRQIITVSPNSFSKAEPTLETEDSRQQARGLVGSDSEFQSEVAMKTECENLLNQKRNGETKVSSRQASPVSDCLSTPKDRLSSINTDDIQSLCSSSQPPSESEVNPATDQDQESGIISETEKPKTELLIGSGRSEKYYSLSEIEGEENTDIGRLSRCPIPSALAAKTSEDTKLIEELSSSDSGSQENQTPETHAVRDDVLCDMDSSSTCNIWSRRGKAASVLKIRTNKSQGKQKQTGRQPKDKLHRKQALSDKSISLTIHHGAEILEPEIFTPDKENLTPSSHMLKRLQDIGDVKDSKSSLKLSGKSCSSLVHSSIAVLASEAFTEPEIFTPDKENLTPSSHMLKRLREFGDIKDTKGSSSKATRKPFFDIRMEENVMVEQEPEDLHSLGSKSKLKHEPLAPKKKAERAPFQPLLEKSSFQSQSYTEASSTASARNNISRGIRSSSNLSDAKSKMKWTIVLDTSSLLDKESRKPLQLLQGLKGTHLVVPRTVLRELNEVKRSRSFLFRRRTEIASSALDWIEECKVNSKWWIQVQSPTEETKAIAPTPPVTPQSNGSSAFPFSLHWNNYAPEIDSPTSEDQVLECALLYRNRNRDEKLVLLSNDVTLKIKAMAEGVICETPHEFYESLVNPFSERFMWTESTARGRTWSHLDNDVLRERYNDRACRRKSTYNRGESGAAAKGLKLILLHNSHYGHTH.

The 52-residue stretch at 64-115 (LVVGRHPDCDILLTHPSISRFHLEIRSISSRQKLFVTDLSSVHGTWVRDLRI) folds into the FHA domain. 7 disordered regions span residues 188–218 (ENTT…DEDT), 588–644 (LGKA…PKSF), 789–818 (PNSF…DSEF), 832–911 (LNQK…LIGS), 942–979 (ALAA…RDDV), 1004–1030 (IRTN…KQAL), and 1159–1225 (VEQE…IRSS). The span at 589-607 (GKADIRSHEENGESEDSRQ) shows a compositional bias: basic and acidic residues. Residues 832–849 (LNQKRNGETKVSSRQASP) show a composition bias toward polar residues. Over residues 870–883 (QSLCSSSQPPSESE) the composition is skewed to low complexity. 4 stretches are compositionally biased toward polar residues: residues 885 to 897 (NPAT…SGII), 957 to 971 (LSSS…QTPE), 1007 to 1018 (NKSQGKQKQTGR), and 1198 to 1212 (SSFQ…SSTA). Low complexity predominate over residues 1213-1225 (SARNNISRGIRSS).

Required for normal spindle orientation at male meiosis II and normal formation of tetrad of microspores. Not involved in female meiosis. The chain is FHA domain-containing protein PS1 from Arabidopsis thaliana (Mouse-ear cress).